Here is a 402-residue protein sequence, read N- to C-terminus: NADH-quinone oxidoreductase subunit D (402 aa).

Belongs to the complex I 49 kDa subunit family. As to quaternary structure, NDH-1 is composed of 14 different subunits. Subunits NuoB, C, D, E, F, and G constitute the peripheral sector of the complex.

Its subcellular location is the cell inner membrane. It carries out the reaction a quinone + NADH + 5 H(+)(in) = a quinol + NAD(+) + 4 H(+)(out). NDH-1 shuttles electrons from NADH, via FMN and iron-sulfur (Fe-S) centers, to quinones in the respiratory chain. The immediate electron acceptor for the enzyme in this species is believed to be ubiquinone. Couples the redox reaction to proton translocation (for every two electrons transferred, four hydrogen ions are translocated across the cytoplasmic membrane), and thus conserves the redox energy in a proton gradient. The chain is NADH-quinone oxidoreductase subunit D from Nitrobacter winogradskyi (strain ATCC 25391 / DSM 10237 / CIP 104748 / NCIMB 11846 / Nb-255).